The sequence spans 85 residues: Large ribosomal subunit protein bL27 (85 aa).

The disordered stretch occupies residues Met-1–Leu-21.

This sequence belongs to the bacterial ribosomal protein bL27 family.

In Hamiltonella defensa subsp. Acyrthosiphon pisum (strain 5AT), this protein is Large ribosomal subunit protein bL27.